Reading from the N-terminus, the 574-residue chain is Phosphoenolpyruvate-protein phosphotransferase (574 aa).

The active-site Tele-phosphohistidine intermediate is His190. Phosphoenolpyruvate contacts are provided by Arg297 and Arg333. Residues Glu432 and Asp456 each coordinate Mg(2+). Phosphoenolpyruvate is bound by residues 455-456 (ND) and Arg466. Cys503 functions as the Proton donor in the catalytic mechanism.

The protein belongs to the PEP-utilizing enzyme family. In terms of assembly, homodimer. Requires Mg(2+) as cofactor.

The protein resides in the cytoplasm. It catalyses the reaction L-histidyl-[protein] + phosphoenolpyruvate = N(pros)-phospho-L-histidyl-[protein] + pyruvate. General (non sugar-specific) component of the phosphoenolpyruvate-dependent sugar phosphotransferase system (sugar PTS). This major carbohydrate active-transport system catalyzes the phosphorylation of incoming sugar substrates concomitantly with their translocation across the cell membrane. Enzyme I transfers the phosphoryl group from phosphoenolpyruvate (PEP) to the phosphoryl carrier protein (HPr). This Latilactobacillus sakei (Lactobacillus sakei) protein is Phosphoenolpyruvate-protein phosphotransferase (ptsI).